Here is a 256-residue protein sequence, read N- to C-terminus: MRPAALRGALLGCLCLALLCLGGADKRLRDNHEWKKLIMVQHWPETVCEKIQNDCRDPPDYWTIHGLWPDKSEGCNRSWPFNLEEIKDLLPEMRAYWPDVIHSFPNRSRFWKHEWEKHGTCAAQVDALNSQKKYFGRSLELYRELDLNSVLLKLGIKPSINYYQVADFKDALARVYGVIPKIQCLPPSQDEEVQTIGQIELCLTKQDQQLQNCTEPGEQPSPKQEVWLANGAAESRGLRVCEDGPVFYPPPKKTKH.

An N-terminal signal peptide occupies residues 1 to 24 (MRPAALRGALLGCLCLALLCLGGA). Cysteines 48 and 55 form a disulfide. H65 is an active-site residue. Intrachain disulfides connect C75/C121, C184/C241, and C202/C213. 2 N-linked (GlcNAc...) asparagine glycosylation sites follow: N76 and N106. Catalysis depends on residues E114 and H118. N-linked (GlcNAc...) asparagine glycosylation occurs at N212.

Belongs to the RNase T2 family. As to expression, ubiquitous. Higher expression levels observed in the temporal lobe and fetal brain.

It localises to the secreted. The protein resides in the lysosome lumen. It is found in the endoplasmic reticulum lumen. Its subcellular location is the mitochondrion intermembrane space. It carries out the reaction a ribonucleotidyl-ribonucleotide-RNA + H2O = a 3'-end 3'-phospho-ribonucleotide-RNA + a 5'-end dephospho-ribonucleoside-RNA + H(+). The catalysed reaction is an adenylyl-uridine-RNA = a 3'-end 2',3'-cyclophospho-AMP-RNA + a 5'-end dephospho-uridine-RNA. It catalyses the reaction a guanylyl-uridine-RNA = a 3'-end 2',3'-cyclophospho-GMP-RNA + a 5'-end dephospho-uridine-RNA. Inhibited by Zn(2+) and Cu(2+). Its function is as follows. Ribonuclease that plays an essential role in innate immune response by recognizing and degrading RNAs from microbial pathogens that are subsequently sensed by TLR8. Cleaves preferentially single-stranded RNA molecules between purine and uridine residues, which critically contributes to the supply of catabolic uridine and the generation of purine-2',3'-cyclophosphate-terminated oligoribonucleotides. In turn, RNase T2 degradation products promote the RNA-dependent activation of TLR8. In plasmacytoid dendritic cells, it cooperates with PLD3 or PLD4 5'-&gt;3' exonucleases to process RNA fragments and release 2',3'-cyclic guanosine monophosphate (2',3'-cGMP), a potent stimulatory ligand for TLR7. Also plays a key role in degradation of mitochondrial RNA and processing of non-coding RNA imported from the cytosol into mitochondria. Participates as well in degradation of mitochondrion-associated cytosolic rRNAs. The sequence is that of Ribonuclease T2 (RNASET2) from Homo sapiens (Human).